We begin with the raw amino-acid sequence, 463 residues long: Phytase A (463 aa).

A signal peptide spans 1–19; that stretch reads MAFFTVALSLYYLLSRVST. An N-linked (GlcNAc...) asparagine glycan is attached at Asn26. An intrachain disulfide couples Cys29 to Cys38. N-linked (GlcNAc...) asparagine glycosylation occurs at Asn41. The 1D-myo-inositol hexakisphosphate site is built by Gln48, Tyr49, Arg79, His80, Arg83, and Thr86. 4 disulfide bridges follow: Cys69-Cys410, Cys211-Cys460, Cys260-Cys278, and Cys431-Cys439. Catalysis depends on His80, which acts as the Nucleophile. N-linked (GlcNAc...) asparagine glycosylation is found at Asn103 and Asn118. Arg163 serves as a coordination point for 1D-myo-inositol hexakisphosphate. A glycan (N-linked (GlcNAc...) asparagine) is linked at Asn203. Position 207 (Asp207) interacts with 1D-myo-inositol hexakisphosphate. Residue Asn226 is glycosylated (N-linked (GlcNAc...) asparagine). Residue Lys297 participates in 1D-myo-inositol hexakisphosphate binding. N-linked (GlcNAc...) asparagine glycosylation is found at Asn331 and Asn335. Residues His357 and Asp358 each contribute to the 1D-myo-inositol hexakisphosphate site. The N-linked (GlcNAc...) asparagine glycan is linked to Asn372.

Belongs to the histidine acid phosphatase family. In terms of assembly, monomer. In terms of processing, seems to be cleaved into at least two pieces, most likely due to proteases in the supernatant. The N-terminal fragment, called phyB seems to retain phytase activity.

It localises to the secreted. The catalysed reaction is 1D-myo-inositol hexakisphosphate + H2O = 1D-myo-inositol 1,2,4,5,6-pentakisphosphate + phosphate. It carries out the reaction 1D-myo-inositol 1,2,4,5,6-pentakisphosphate + H2O = 1D-myo-inositol 1,2,5,6-tetrakisphosphate + phosphate. It catalyses the reaction 1D-myo-inositol 1,2,5,6-tetrakisphosphate + H2O = 1D-myo-inositol 1,2,6-trisphosphate + phosphate. The enzyme catalyses 1D-myo-inositol 1,2,6-trisphosphate + H2O = 1D-myo-inositol 1,2-bisphosphate + phosphate. The catalysed reaction is 1D-myo-inositol 1,2-bisphosphate + H2O = 1D-myo-inositol 2-phosphate + phosphate. Its function is as follows. Catalyzes the phosphate monoester hydrolysis of phytic acid (myo-inositol hexakisphosphate), which results in the stepwise formation of myo-inositol pentakis-, tetrakis-, tris-, bis-, and monophosphates, as well as the liberation of inorganic phosphate. Myo-inositol 2-monophosphate is the end product. Has a broad substrate specificity and is also able to dephosphorylate other classic acid phosphatase substrates such as p-nitrophenyl phosphate, phenyl phosphate, fructose 1,6-bisphosphate, fructose 6-phosphate, glucose 6-phosphate, ribose 5-phosphate, alpha-glycerophosphate, beta-glycerophosphate, 3-phosphoglycerate, as well as ADP and ATP. The protein is Phytase A of Emericella nidulans (strain FGSC A4 / ATCC 38163 / CBS 112.46 / NRRL 194 / M139) (Aspergillus nidulans).